A 375-amino-acid polypeptide reads, in one-letter code: Queuine tRNA-ribosyltransferase (375 aa).

The active-site Proton acceptor is aspartate 93. Substrate-binding positions include 93–97 (DSGGY), aspartate 147, glutamine 194, and glycine 221. The interval 252–258 (GVGKPDD) is RNA binding. Catalysis depends on aspartate 271, which acts as the Nucleophile. An RNA binding; important for wobble base 34 recognition region spans residues 276 to 280 (TRSGR). 4 residues coordinate Zn(2+): cysteine 309, cysteine 311, cysteine 314, and histidine 340.

Belongs to the queuine tRNA-ribosyltransferase family. Homodimer. Within each dimer, one monomer is responsible for RNA recognition and catalysis, while the other monomer binds to the replacement base PreQ1. It depends on Zn(2+) as a cofactor.

It carries out the reaction 7-aminomethyl-7-carbaguanine + guanosine(34) in tRNA = 7-aminomethyl-7-carbaguanosine(34) in tRNA + guanine. Its pathway is tRNA modification; tRNA-queuosine biosynthesis. Catalyzes the base-exchange of a guanine (G) residue with the queuine precursor 7-aminomethyl-7-deazaguanine (PreQ1) at position 34 (anticodon wobble position) in tRNAs with GU(N) anticodons (tRNA-Asp, -Asn, -His and -Tyr). Catalysis occurs through a double-displacement mechanism. The nucleophile active site attacks the C1' of nucleotide 34 to detach the guanine base from the RNA, forming a covalent enzyme-RNA intermediate. The proton acceptor active site deprotonates the incoming PreQ1, allowing a nucleophilic attack on the C1' of the ribose to form the product. After dissociation, two additional enzymatic reactions on the tRNA convert PreQ1 to queuine (Q), resulting in the hypermodified nucleoside queuosine (7-(((4,5-cis-dihydroxy-2-cyclopenten-1-yl)amino)methyl)-7-deazaguanosine). This is Queuine tRNA-ribosyltransferase from Sphingopyxis alaskensis (strain DSM 13593 / LMG 18877 / RB2256) (Sphingomonas alaskensis).